The primary structure comprises 265 residues: MGQKIHPTGFRLAVSRNWASRWYANNTKFAGMLKEDIEVREFLKKKLKNASVGRVVIERPARNARITIYSSRPGVVIGKKGEDIELLKAELQRRMGVPVHVNIEEIRKPETDAQLIADSITQQLERRIMFRRAMKRAMQNAMRLGAQGIKIMSSGRLNGIEIARTEWYREGRVPLHTLRADIDYGFSEAETTYGIIGVKVWVYKGDHLGRNDAPVVEEPQEDRRRRPGRPEGRRREGEGRPAGNRRGGAGAGRRAAPGADAKSGE.

A KH type-2 domain is found at 39–107 (VREFLKKKLK…PVHVNIEEIR (69 aa)). Residues 211–265 (NDAPVVEEPQEDRRRRPGRPEGRRREGEGRPAGNRRGGAGAGRRAAPGADAKSGE) form a disordered region. Basic and acidic residues predominate over residues 221–239 (EDRRRRPGRPEGRRREGEG).

It belongs to the universal ribosomal protein uS3 family. In terms of assembly, part of the 30S ribosomal subunit. Forms a tight complex with proteins S10 and S14.

Its function is as follows. Binds the lower part of the 30S subunit head. Binds mRNA in the 70S ribosome, positioning it for translation. This chain is Small ribosomal subunit protein uS3, found in Cupriavidus metallidurans (strain ATCC 43123 / DSM 2839 / NBRC 102507 / CH34) (Ralstonia metallidurans).